The chain runs to 140 residues: Lymphocyte antigen 6 complex locus protein G5c (140 aa).

A signal peptide spans 1–41 (MRFMAGPAGSQNPGPMCFHSSLQALYTVLLIVLVMMSLVFG). Residues 60–140 (LRCYRCLLET…SQCCFLGFLQ (81 aa)) form the UPAR/Ly6 domain. Disulfide bonds link Cys62-Cys89, Cys65-Cys74, Cys81-Cys107, and Cys116-Cys133. An N-linked (GlcNAc...) asparagine glycan is attached at Asn96.

In terms of assembly, forms oligomers. In terms of processing, N-glycosylated.

The protein localises to the secreted. May have a role in hematopoietic cell differentiation. This Macaca mulatta (Rhesus macaque) protein is Lymphocyte antigen 6 complex locus protein G5c (LY6G5C).